Reading from the N-terminus, the 268-residue chain is Small ribosomal subunit protein eS1 (268 aa).

Positions 1 to 21 are disordered; sequence MAVGKNKGLSKGGKKGGKKKV.

Belongs to the eukaryotic ribosomal protein eS1 family. In terms of assembly, component of the small ribosomal subunit. Mature ribosomes consist of a small (40S) and a large (60S) subunit. The 40S subunit contains about 33 different proteins and 1 molecule of RNA (18S). The 60S subunit contains about 49 different proteins and 3 molecules of RNA (28S, 5.8S and 5S).

It localises to the cytoplasm. Essential for oogenesis; required for late follicle cell development. The polypeptide is Small ribosomal subunit protein eS1 (Drosophila willistoni (Fruit fly)).